A 305-amino-acid polypeptide reads, in one-letter code: MTKTRCMHEHFRKIVQRVKKTLRLSASDKSHGVAELDDLPEECVSIIVSFTSPQDACVLASVSKTFASAVKSDIVWEKFIPPEYESLISQSRAFKFLSKKELYFALCDKSVLIDDGKKSLWIEKANAKRCIMISAMNLAIAWGNSPQSWRWIPDPQARFETVAELLEVCLFEIRGRINSRVISPKTRYSAYIVYKKLNICYGFENVAVEVVVGVVGQDLEESCRRYICFDETMDEQFRRRDRGKNLVKPERRKDGWMEIKIGEFFNEGGLLNDDEIEMVALEAKQRHWKRGLIIQGIEIRPTNIR.

The 47-residue stretch at 33–79 (VAELDDLPEECVSIIVSFTSPQDACVLASVSKTFASAVKSDIVWEKF) folds into the F-box domain.

This chain is Putative F-box protein PP2-B8 (PP2B8), found in Arabidopsis thaliana (Mouse-ear cress).